A 707-amino-acid polypeptide reads, in one-letter code: Choline transporter-like protein 4 (707 aa).

Residues 1–32 (MGEKQDPDKAYGKPAKYDPSFRGPIRNRSCTD) lie on the Cytoplasmic side of the membrane. The chain crosses the membrane as a helical span at residues 33–53 (IICCVLFFVFILGYIAVGLVA). Residues 54–226 (WVYGDPQQVL…KIFEDFAQSW (173 aa)) lie on the Extracellular side of the membrane. N-linked (GlcNAc...) asparagine glycans are attached at residues Asn67, Asn142, Asn184, and Asn195. Residues 227–247 (YWILAALGVALVLSLLFVLLL) form a helical membrane-spanning segment. Residues 248–249 (RL) lie on the Cytoplasmic side of the membrane. Residues 250–270 (VAGPLVFVLIIGVLGVLAYGI) traverse the membrane as a helical segment. Over 271-306 (YHCWNEYRLLRDKGASISQLGFTTNLSAYSSVQETW) the chain is Extracellular. Residue Asn295 is glycosylated (N-linked (GlcNAc...) asparagine). Residues 307-327 (LAALILLAVLEGILLLMLIFL) form a helical membrane-spanning segment. At 328–355 (RQRIRIAIALLEEASRAVGQMMSTLFYP) the chain is on the cytoplasmic side. A helical membrane pass occupies residues 356 to 376 (LVTFVLLLVCIAYWAMTALYL). Residues 377 to 452 (ATSGQPQYVL…GVLGLFWTIN (76 aa)) lie on the Extracellular side of the membrane. Residues Asn390, Asn402, and Asn413 are each glycosylated (N-linked (GlcNAc...) asparagine). Residues 453 to 473 (WVLALGQCVLAGAFASFYWAF) traverse the membrane as a helical segment. Residues 474 to 498 (HKPRDIPTFPLSSAFIRTLRYHTGS) lie on the Cytoplasmic side of the membrane. Residues 499–519 (LAFGALILTLVQIARAILEYI) form a helical membrane-spanning segment. Over 520 to 557 (DHKLRGAQNPVARCIMCCFKCCLWCLEKFIKFLNRNAY) the chain is Extracellular. The helical transmembrane segment at 558–578 (IMIAIYGKNFCVSAKNAFMLL) threads the bilayer. At 579-594 (MRNIVRVVVLDKVTDL) the chain is on the cytoplasmic side. A helical membrane pass occupies residues 595–615 (LLFFGKLLVVGGVGVLSFFFF). The Extracellular portion of the chain corresponds to 616–635 (TGRIQGLGKDFESPQLNYYW). A helical membrane pass occupies residues 636 to 656 (LPIMTSIMGAYVIASGFFSVF). Residues 657-707 (GMCVDTLFLCFLEDLERNDGSLDRPYYMSKALLKILGKKNEVPSGDKKRKK) are Cytoplasmic-facing.

Belongs to the CTL (choline transporter-like) family. Post-translationally, N-glycosylated; N-glycosylation of Asn-677 and Asn-390 is required for a proper thiamine pyrophosphate uptake.

The protein localises to the membrane. It localises to the apical cell membrane. The enzyme catalyses choline(out) + n H(+)(in) = choline(in) + n H(+)(out). It carries out the reaction thiamine diphosphate(out) = thiamine diphosphate(in). In terms of biological role, choline transporter that plays a role in the choline-acetylcholine system and is required to the efferent innervation of hair cells in the olivocochlear bundle for the maintenance of physiological function of outer hair cells and the protection of hair cells from acoustic injury. Also described as a thiamine pyrophosphate transporter in colon, may mediate the absorption of microbiota-generated thiamine pyrophosphate and contribute to host thiamine (vitamin B1) homeostasis. This is Choline transporter-like protein 4 from Sus scrofa (Pig).